The following is a 108-amino-acid chain: MIDEYLKKNGIKFTQRQYNDKIKYTLLTPVASKISDVLKTVTEMMKFVDNNEYVVVPIAKAGDYMVELSLSQSSMSWRIAKKMTYIDVTDKDIDVLMNVLQKLKNVKL.

This is an uncharacterized protein from Acidianus sp. F28 (AFV-2).